The sequence spans 493 residues: Galactose-1-phosphate uridylyltransferase (493 aa).

The protein belongs to the galactose-1-phosphate uridylyltransferase type 2 family.

The protein resides in the cytoplasm. The enzyme catalyses alpha-D-galactose 1-phosphate + UDP-alpha-D-glucose = alpha-D-glucose 1-phosphate + UDP-alpha-D-galactose. Its pathway is carbohydrate metabolism; galactose metabolism. The polypeptide is Galactose-1-phosphate uridylyltransferase (Lactococcus lactis subsp. cremoris (strain SK11)).